We begin with the raw amino-acid sequence, 475 residues long: Aspartyl/glutamyl-tRNA(Asn/Gln) amidotransferase subunit B (475 aa).

This sequence belongs to the GatB/GatE family. GatB subfamily. In terms of assembly, heterotrimer of A, B and C subunits.

It carries out the reaction L-glutamyl-tRNA(Gln) + L-glutamine + ATP + H2O = L-glutaminyl-tRNA(Gln) + L-glutamate + ADP + phosphate + H(+). It catalyses the reaction L-aspartyl-tRNA(Asn) + L-glutamine + ATP + H2O = L-asparaginyl-tRNA(Asn) + L-glutamate + ADP + phosphate + 2 H(+). Allows the formation of correctly charged Asn-tRNA(Asn) or Gln-tRNA(Gln) through the transamidation of misacylated Asp-tRNA(Asn) or Glu-tRNA(Gln) in organisms which lack either or both of asparaginyl-tRNA or glutaminyl-tRNA synthetases. The reaction takes place in the presence of glutamine and ATP through an activated phospho-Asp-tRNA(Asn) or phospho-Glu-tRNA(Gln). This Chlorobium limicola (strain DSM 245 / NBRC 103803 / 6330) protein is Aspartyl/glutamyl-tRNA(Asn/Gln) amidotransferase subunit B.